A 63-amino-acid polypeptide reads, in one-letter code: Large ribosomal subunit protein uL29 (63 aa).

The protein belongs to the universal ribosomal protein uL29 family.

In Pectobacterium atrosepticum (strain SCRI 1043 / ATCC BAA-672) (Erwinia carotovora subsp. atroseptica), this protein is Large ribosomal subunit protein uL29.